The sequence spans 183 residues: MAELATIARPYAEALFKATTGAGVDPVSAAAWLDELAAIADRPELRQLAGNPKVTADQVFALFTQVLKDAARAALPEMAGNFLRTVIANGRINVLTQVAQQFRALLNRRNGFSDAVVYSAFPMDSAALSEVGAALQKRFGRKLNLAVQQDPSLIGGIRVVVGDEVLDSSVKARLEQMKAALTA.

The protein belongs to the ATPase delta chain family. F-type ATPases have 2 components, F(1) - the catalytic core - and F(0) - the membrane proton channel. F(1) has five subunits: alpha(3), beta(3), gamma(1), delta(1), epsilon(1). F(0) has three main subunits: a(1), b(2) and c(10-14). The alpha and beta chains form an alternating ring which encloses part of the gamma chain. F(1) is attached to F(0) by a central stalk formed by the gamma and epsilon chains, while a peripheral stalk is formed by the delta and b chains.

It localises to the cell inner membrane. Functionally, f(1)F(0) ATP synthase produces ATP from ADP in the presence of a proton or sodium gradient. F-type ATPases consist of two structural domains, F(1) containing the extramembraneous catalytic core and F(0) containing the membrane proton channel, linked together by a central stalk and a peripheral stalk. During catalysis, ATP synthesis in the catalytic domain of F(1) is coupled via a rotary mechanism of the central stalk subunits to proton translocation. Its function is as follows. This protein is part of the stalk that links CF(0) to CF(1). It either transmits conformational changes from CF(0) to CF(1) or is implicated in proton conduction. The chain is ATP synthase subunit delta from Verminephrobacter eiseniae (strain EF01-2).